The following is a 704-amino-acid chain: RCC1 domain-containing protein DDB_G0295713 (704 aa).

2 RCC1 repeats span residues 1–48 and 69–120; these read MYCW…VKGE and KNRC…ITDQ. The segment at 221 to 246 is disordered; it reads YNNNNNNNNNNNNNNNNNNNNNNNNN. Residues 222–246 are compositionally biased toward low complexity; it reads NNNNNNNNNNNNNNNNNNNNNNNNN. One copy of the RCC1 3 repeat lies at 298–348; that stretch reads QNQVYGWGENLNGQLGIEGIDYSTEPILIELPLVEIKHISSGAYHSAFVTN. A compositionally biased stretch (basic and acidic residues) spans 412-431; the sequence is IKDKNENNETKHTNKNKDNH. The segment at 412 to 458 is disordered; that stretch reads IKDKNENNETKHTNKNKDNHDDDDESDHSDDDHHDDDDNDKDSQGIN. Residues 432–451 show a composition bias toward acidic residues; the sequence is DDDDESDHSDDDHHDDDDND. Residues 668 to 698 adopt a coiled-coil conformation; sequence IEQTSTQVANSENENENEIEMKMKMKKNEMK.

In Dictyostelium discoideum (Social amoeba), this protein is RCC1 domain-containing protein DDB_G0295713.